A 155-amino-acid chain; its full sequence is Class I hydrophobin C (155 aa).

Positions 1–22 (MLVTMRLSRSIAVFTLVTYATG) are cleaved as a signal peptide. Cystine bridges form between cysteine 52–cysteine 129, cysteine 60–cysteine 123, cysteine 61–cysteine 101, and cysteine 130–cysteine 148.

This sequence belongs to the fungal hydrophobin family. In terms of assembly, self-assembles to form functional amyloid fibrils called rodlets. Self-assembly into fibrillar rodlets occurs spontaneously at hydrophobic:hydrophilic interfaces and the rodlets further associate laterally to form amphipathic monolayers.

The protein localises to the secreted. It localises to the spore wall. Its function is as follows. Aerial growth, conidiation, and dispersal of filamentous fungi in the environment rely upon a capability of their secreting small amphipathic proteins called hydrophobins (HPBs) with low sequence identity. Class I can self-assemble into an outermost layer of rodlet bundles on aerial cell surfaces, conferring cellular hydrophobicity that supports fungal growth, development and dispersal; whereas Class II form highly ordered films at water-air interfaces through intermolecular interactions but contribute nothing to the rodlet structure. RodC is a class I hydrophobin that, unlike rodA, is not required for rodlet formation. The protein is Class I hydrophobin C of Aspergillus fumigatus (strain ATCC MYA-4609 / CBS 101355 / FGSC A1100 / Af293) (Neosartorya fumigata).